We begin with the raw amino-acid sequence, 299 residues long: GTP cyclohydrolase FolE2 (299 aa).

The protein belongs to the GTP cyclohydrolase IV family.

The enzyme catalyses GTP + H2O = 7,8-dihydroneopterin 3'-triphosphate + formate + H(+). It functions in the pathway cofactor biosynthesis; 7,8-dihydroneopterin triphosphate biosynthesis; 7,8-dihydroneopterin triphosphate from GTP: step 1/1. Converts GTP to 7,8-dihydroneopterin triphosphate. This chain is GTP cyclohydrolase FolE2, found in Klebsiella pneumoniae.